Here is a 524-residue protein sequence, read N- to C-terminus: Bifunctional methyltransferase (524 aa).

The interval M1 to P306 is hemK. The segment at M1–N308 is RF MTase. S-adenosyl-L-methionine is bound by residues G146–G150, D169, W198, N213, E353, E378, N405, and D427. N213 to Y216 is a substrate binding site. Positions I307–H524 are tRNA (guanine-N(7)-)-methyltransferase. The interval R311–H524 is tRNA MTase. Residue D427 is part of the active site. K431 and D463 together coordinate substrate.

This sequence in the C-terminal section; belongs to the class I-like SAM-binding methyltransferase superfamily. TrmB family. The protein in the N-terminal section; belongs to the protein N5-glutamine methyltransferase family. PrmC subfamily.

The enzyme catalyses L-glutaminyl-[peptide chain release factor] + S-adenosyl-L-methionine = N(5)-methyl-L-glutaminyl-[peptide chain release factor] + S-adenosyl-L-homocysteine + H(+). It carries out the reaction guanosine(46) in tRNA + S-adenosyl-L-methionine = N(7)-methylguanosine(46) in tRNA + S-adenosyl-L-homocysteine. Methylates the class 1 translation termination release factors RF1/PrfA and RF2/PrfB on the glutamine residue of the universally conserved GGQ motif. Functionally, catalyzes the formation of N(7)-methylguanine at position 46 (m7G46) in tRNA. This is Bifunctional methyltransferase (prmC/trmB) from Rickettsia conorii (strain ATCC VR-613 / Malish 7).